The primary structure comprises 38 residues: Large ribosomal subunit protein bL36 (38 aa).

The protein belongs to the bacterial ribosomal protein bL36 family.

The sequence is that of Large ribosomal subunit protein bL36 from Hamiltonella defensa subsp. Acyrthosiphon pisum (strain 5AT).